Reading from the N-terminus, the 485-residue chain is Cyclic GMP-AMP synthase-like receptor (485 aa).

ATP-binding positions include Ser-70 and 82-84; that span reads EYD. Mg(2+) contacts are provided by Glu-82, Asp-84, and Asp-204. Residues Asp-204 and 247–254 contribute to the GTP site; that span reads RLSFYEQE. ATP is bound by residues Lys-271 and Lys-274. The Mn(2+) site is built by Ile-298 and Asp-304.

This sequence belongs to the mab-21 family. Mg(2+) is required as a cofactor. Requires Mn(2+) as cofactor.

The enzyme catalyses GTP + ATP = 2',3'-cGAMP + 2 diphosphate. The catalysed reaction is GTP + ATP = pppGp(2'-5')A + diphosphate. It catalyses the reaction pppGp(2'-5')A = 2',3'-cGAMP + diphosphate. In terms of biological role, nucleotidyltransferase that catalyzes the formation of cyclic GMP-AMP (2',3'-cGAMP) from ATP and GTP and plays a key role in innate immunity. Directly binds some unknown ligand, activating the nucleotidyltransferase activity, leading to synthesis of 2',3'-cGAMP, a second messenger that binds to and activates Sting, thereby triggering the immune response via activation of the NF-kappa-B transcription factor. In Trichogramma pretiosum (Parasitoid wasp), this protein is Cyclic GMP-AMP synthase-like receptor.